A 326-amino-acid chain; its full sequence is MRIALDAMGGDRAPQVVVAGAAAAAREGVEVLLVGDEAQVRAELARLGADLPVWHAPDHIRMEEAATEVRRRPQASVRVAMELLKRGEVQAVVSMGHSGATLAAALLVLGRVKGVERPALLVEFPSLRGRTFLLDGGANADCRPSFLVQFAAMGLAYAEASGALAPRVGLLSIGEEEGKGNALVQEAYPLLRAALGERFYGNVEGRDIFLGTTEVVVTDGFTGNVALKLAEGEARVLLTWIKEALTSSFRARLGALLVREALARVKARVDPAQYGAMPLLGVEGAVFIGHGSADALAVKNALLRAKAMVEAGLLARVRQRLSALHV.

Belongs to the PlsX family. Homodimer. Probably interacts with PlsY.

It localises to the cytoplasm. The enzyme catalyses a fatty acyl-[ACP] + phosphate = an acyl phosphate + holo-[ACP]. The protein operates within lipid metabolism; phospholipid metabolism. Its function is as follows. Catalyzes the reversible formation of acyl-phosphate (acyl-PO(4)) from acyl-[acyl-carrier-protein] (acyl-ACP). This enzyme utilizes acyl-ACP as fatty acyl donor, but not acyl-CoA. In Thermus thermophilus (strain ATCC BAA-163 / DSM 7039 / HB27), this protein is Phosphate acyltransferase.